The chain runs to 452 residues: Transcription factor PERIANTHIA (452 aa).

The 64-residue stretch at 164-227 (DQRTLRRLAQ…RGVSADHTHL (64 aa)) folds into the bZIP domain. The segment at 166 to 186 (RTLRRLAQNREAARKSRLRKK) is basic motif. Positions 192-206 (LENSRIRLAQLEEEL) are leucine-zipper. The region spanning 233–449 (VFSFELEYTR…RALSSLWLAR (217 aa)) is the DOG1 domain.

The protein belongs to the bZIP family. Interacts with GRXC7/ROXY1. Interacts with BOP1 and BOP2.

It is found in the nucleus. Transcriptional activator involved in the determination of floral organ number. Acts to determine floral organ patterning by establishing floral organ primordia in specific numbers and positions. Plays a role in regulating stem cell fate by directly controlling AG expression. Binds to the 5'-AAGAAT-3' cis-acting element found in AG promoter. Might represent a target for a post-translational modification by GRXC7/ROXY1. This is Transcription factor PERIANTHIA (PAN) from Arabidopsis thaliana (Mouse-ear cress).